A 501-amino-acid chain; its full sequence is Type II secretion system protein E (501 aa).

Residue 262–269 participates in ATP binding; sequence GPTGSGKS. Zn(2+) contacts are provided by Cys-395, Cys-398, Cys-428, and Cys-431.

Belongs to the GSP E family. As to quaternary structure, forms homooligomers; most probably hexamers. Interacts with ExeL/GspL. Requires Zn(2+) as cofactor.

The protein localises to the cell inner membrane. It carries out the reaction ATP + H2O + cellular proteinSide 1 = ADP + phosphate + cellular proteinSide 2.. ATPase component of the type II secretion system required for the energy-dependent secretion of extracellular factors such as proteases and toxins from the periplasm. Acts as a molecular motor to provide the energy that is required for assembly of the pseudopilus and the extrusion of substrates generated in the cytoplasm. The protein is Type II secretion system protein E (exeE) of Aeromonas hydrophila.